The following is a 68-amino-acid chain: uncharacterized protein (68 aa).

This is an uncharacterized protein from Haemophilus influenzae (strain ATCC 51907 / DSM 11121 / KW20 / Rd).